A 209-amino-acid polypeptide reads, in one-letter code: MIKEFCAENLTLLPTLDAGQVSRVELCDNLAVGGTTPSYGVIKEACQLLHDKKISVATMIRPRGGDFVYNDLELKAMEEDILKAVEAGSDALVLGLLTTENQLDTDAIEQLLPATQGLPLVFHMAFDHIPTDHQHQALDQLIDYGFVRVLTHGSPEATPITDNVEQLKSLVTYANKRIEIMIGGGVTAENCQNLSQLTGTAIVHGTKII.

It is found in the cytoplasm. The protein is PF03932 family protein CutC of Streptococcus pyogenes serotype M6 (strain ATCC BAA-946 / MGAS10394).